The sequence spans 235 residues: Transcriptional regulatory protein MalR (235 aa).

Residues 3-119 (NVLIVEDDPM…RFQTALSDYR (117 aa)) form the Response regulatory domain. Residue D54 is modified to 4-aspartylphosphate. A DNA-binding region (H-T-H motif) is located at residues 178–197 (TEDLAKHTEISQVSIRKYLK).

Phosphorylated and activated by MalK.

It localises to the cytoplasm. Its function is as follows. Member of a two-component regulatory system MalK/MalR. Activates transcription of maeA, maeN and yflS in presence of malate by binding to their promoter region. This chain is Transcriptional regulatory protein MalR (malR), found in Bacillus subtilis (strain 168).